A 206-amino-acid chain; its full sequence is uncharacterized protein (206 aa).

The MurNAc-LAA domain maps to 32 to 201 (VYIDAGHGGE…AADAIVNGID (170 aa)).

This sequence belongs to the N-acetylmuramoyl-L-alanine amidase 3 family.

This is an uncharacterized protein from Bacillus subtilis (strain 168).